We begin with the raw amino-acid sequence, 932 residues long: Ribosome biogenesis protein ERB1 (932 aa).

A compositionally biased stretch (low complexity) spans 1–18; that stretch reads MVRPSSSSSASASAARSG. Positions 1–229 are disordered; the sequence is MVRPSSSSSA…RSQAAQAFDL (229 aa). Over residues 27–36 the composition is skewed to polar residues; it reads PTATNPTTRA. Acidic residues-rich tracts occupy residues 57-119 and 150-172; these read VSDD…EVDS and DNSD…DEDE. Low complexity predominate over residues 175 to 184; it reads SAFAARSDAS. WD repeat units lie at residues 555-594 and 604-644; these read PDGG…CTAS and AERS…NYAK. Residues 679–698 are disordered; sequence SMPSKPDARSPVAWTRPSEA. WD repeat units follow at residues 762–800, 803–842, 846–885, and 901–932; these read SKGS…LIKT, SGFK…RPYK, YHAR…DYGE, and KNGL…LWTT.

It belongs to the WD repeat BOP1/ERB1 family. In terms of assembly, component of the NOP7 complex, composed of ERB1, NOP7 and YTM1. The complex is held together by ERB1, which interacts with NOP7 via its N-terminal domain and with YTM1 via a high-affinity interaction between the seven-bladed beta-propeller domains of the 2 proteins. The NOP7 complex associates with the 66S pre-ribosome.

The protein localises to the nucleus. It localises to the nucleolus. Its subcellular location is the nucleoplasm. In terms of biological role, component of the NOP7 complex, which is required for maturation of the 25S and 5.8S ribosomal RNAs and formation of the 60S ribosome. The sequence is that of Ribosome biogenesis protein ERB1 from Mycosarcoma maydis (Corn smut fungus).